Reading from the N-terminus, the 219-residue chain is Response regulator ArlR (219 aa).

Residues 3–116 (NILIVEDEQN…ELLARIRAVL (114 aa)) form the Response regulatory domain. Asp52 carries the post-translational modification 4-aspartylphosphate. Positions 122 to 219 (KDVLDINGII…TVRGVGYVIR (98 aa)) form a DNA-binding region, ompR/PhoB-type.

In terms of processing, phosphorylated by ArlS.

The protein localises to the cytoplasm. Member of the two-component regulatory system ArlS/ArlR. The sequence is that of Response regulator ArlR (arlR) from Staphylococcus epidermidis (strain ATCC 35984 / DSM 28319 / BCRC 17069 / CCUG 31568 / BM 3577 / RP62A).